A 514-amino-acid polypeptide reads, in one-letter code: Peptide chain release factor 3 (514 aa).

A tr-type G domain is found at 8–268 (KKRRTFAIIS…TFLEFAPEPH (261 aa)). Residues 17–24 (SHPDAGKT), 85–89 (DTPGH), and 139–142 (NKLD) contribute to the GTP site.

Belongs to the TRAFAC class translation factor GTPase superfamily. Classic translation factor GTPase family. PrfC subfamily.

The protein localises to the cytoplasm. Its function is as follows. Increases the formation of ribosomal termination complexes and stimulates activities of RF-1 and RF-2. It binds guanine nucleotides and has strong preference for UGA stop codons. It may interact directly with the ribosome. The stimulation of RF-1 and RF-2 is significantly reduced by GTP and GDP, but not by GMP. This chain is Peptide chain release factor 3, found in Streptococcus uberis (strain ATCC BAA-854 / 0140J).